We begin with the raw amino-acid sequence, 610 residues long: Zinc metalloproteinase-disintegrin-like halysase (610 aa).

A signal peptide spans 1–20 (MIQVLLVTICLAVFPYQGSS). Positions 21-182 (IILESGNVND…WESYEPIKKA (162 aa)) are excised as a propeptide. One can recognise a Peptidase M12B domain in the interval 199 to 395 (KYVKLVMVAD…DMPQCILKKP (197 aa)). Asn218 carries an N-linked (GlcNAc...) asparagine glycan. 3 disulfides stabilise this stretch: Cys310–Cys390, Cys350–Cys374, and Cys352–Cys357. Residue His335 coordinates Zn(2+). Glu336 is an active-site residue. Zn(2+)-binding residues include His339 and His345. In terms of domain architecture, Disintegrin spans 403–488 (PPVCGNYFVE…AECTDRFQRN (86 aa)). 6 residues coordinate Ca(2+): Val405, Asn408, Phe410, Glu412, Glu415, and Asp418. 14 cysteine pairs are disulfide-bonded: Cys406-Cys435, Cys417-Cys430, Cys419-Cys425, Cys429-Cys452, Cys443-Cys449, Cys448-Cys474, Cys461-Cys481, Cys468-Cys499, Cys492-Cys504, Cys511-Cys561, Cys526-Cys572, Cys539-Cys549, Cys556-Cys598, and Cys592-Cys603. The D/ECD-tripeptide motif lies at 467-469 (ECD).

This sequence belongs to the venom metalloproteinase (M12B) family. P-III subfamily. P-IIIa sub-subfamily. Monomer. Requires Zn(2+) as cofactor. Expressed by the venom gland.

Its subcellular location is the secreted. Its activity is regulated as follows. Inhibited by EDTA and EGTA. Not inhibited by PMSF, antipain, pepstatin, and iodoacetamide. Strongly inhibits the collagen-induced human platelet aggregation (inhibition of alpha-2/beta-1 (ITGA2/ITGB1) integrin). Hydrolyzes the Aalpha-chain of fibrinogen, without cleavage of Bbeta- and gamma-chains. Degrades type IV collagen (but not types I, II and V), fibronectin and vitronectin and also integrins alpha-1/beta-1 (ITGA1/ITGB1) and alpha-5/beta/1 (ITGA5/ITGB1) (but not alpha-V/beta-3 (ITGAV/ITGB3) and alpha-V/beta-5 (ITGAV/ITGB5) integrins). Both metalloproteinase (peptidase M12B) and disintegrin-like domains (recombinantly expressed and named halydin) play characteristic roles to inhibit human platelet aggregation. Induces apoptosis and strongly inhibits proliferation of endothelial cells as well as adhesion of the cells to extracellular matrix proteins. The apoptosis is closely associated with activation of caspase-3 and decreased level of Bcl-X(L)/Bax. Apohalysase, which lacks metalloprotease activity, is also able to induce the apoptosis. Cleaves insulin B chain at '34-His-|-Leu-35', '37-Glu-|-Ala-38', '38-Ala-|-Leu-39', '39-Leu-|-Tyr-40', '40-Tyr-|-Leu-41', '47-Gly-|-Phe-48' and '48-Phe-|-Phe-49' bonds. The chain is Zinc metalloproteinase-disintegrin-like halysase from Gloydius halys (Chinese water mocassin).